Consider the following 117-residue polypeptide: Protein TCL1B2 (117 aa).

The protein belongs to the TCL1 family.

The polypeptide is Protein TCL1B2 (Tcl1b2) (Mus musculus (Mouse)).